A 97-amino-acid chain; its full sequence is UPF0235 protein AZOSEA09540 (97 aa).

The protein belongs to the UPF0235 family.

The sequence is that of UPF0235 protein AZOSEA09540 from Aromatoleum aromaticum (strain DSM 19018 / LMG 30748 / EbN1) (Azoarcus sp. (strain EbN1)).